The primary structure comprises 405 residues: Prostaglandin E2 receptor EP1 subtype (405 aa).

Over 1-39 (MSPYGLNLSLVDEATTCVTPRVPNTSVVLPTGGNGTSPA) the chain is Extracellular. N-linked (GlcNAc...) asparagine glycosylation is found at N7, N24, and N34. Residues 40–62 (LPIFSMTLGAVSNVLALALLAQV) traverse the membrane as a helical segment. The Cytoplasmic segment spans residues 63 to 80 (AGRLRRRRSTATFLLFVA). Residues 81–99 (SLLAIDLAGHVIPGALVLR) traverse the membrane as a helical segment. Residues 100-113 (LYTAGRAPAGGACH) lie on the Extracellular side of the membrane. C112 and C190 are joined by a disulfide. The chain crosses the membrane as a helical span at residues 114 to 135 (FLGGCMVFFGLCPLLLGCGMAV). Residues 136-157 (ERCVGVTQPLIHAARVSVARAR) lie on the Cytoplasmic side of the membrane. The helical transmembrane segment at 158–179 (LALALLAAMALAVALLPLVHVG) threads the bilayer. The Extracellular portion of the chain corresponds to 180-202 (HYELQYPGTWCFISLGPPGGWRQ). A helical transmembrane segment spans residues 203–228 (ALLAGLFAGLGLAALLAALVCNTLSG). The Cytoplasmic segment spans residues 229–301 (LALLRARWRR…HAHDVEMVGQ (73 aa)). The chain crosses the membrane as a helical span at residues 302-323 (LVGIMVVSCICWSPLLVLVVLA). Topologically, residues 324-337 (IGGWNSNSLQRPLF) are extracellular. The helical transmembrane segment at 338-357 (LAVRLASWNQILDPWVYILL) threads the bilayer. The Cytoplasmic segment spans residues 358–405 (RQAMLRQLLRLLPLRVSAKGGPTELSLTKSAWEASSLRSSRHSGFSHL).

Belongs to the G-protein coupled receptor 1 family. Post-translationally, phosphorylated. As to expression, highly abundant in kidney and lung. Found in a lesser extent in spleen, colon, and thymus. Also expressed in uterine myometrium and endometrium.

The protein localises to the cell membrane. Its function is as follows. Receptor for prostaglandin E2 (PGE2). The activity of this receptor is mediated by G(q) proteins which activate a phosphatidylinositol-calcium second messenger system. May play a role as an important modulator of renal function. Implicated the smooth muscle contractile response to PGE2 in various tissues. Isoform 1 and isoform 2 have identical ligand binding properties, but isoform 2 lacks coupling to calcium mobilization and may therefore attenuate the action of PGE2 on tissues. The protein is Prostaglandin E2 receptor EP1 subtype (Ptger1) of Rattus norvegicus (Rat).